We begin with the raw amino-acid sequence, 658 residues long: L-type lectin-domain containing receptor kinase V.4 (658 aa).

Positions 1–25 (MSRTIGSRVIFLILALFCCTENSRG) are cleaved as a signal peptide. A legume-lectin like region spans residues 26–248 (KLVMQGSAGF…RAMHYMLSWF (223 aa)). The Extracellular portion of the chain corresponds to 26–280 (KLVMQGSAGF…EKSLVYRIVL (255 aa)). Asn66 and Asn196 each carry an N-linked (GlcNAc...) asparagine glycan. The helical transmembrane segment at 281–301 (VTSLALVLFVALVASALSIFF) threads the bilayer. The Cytoplasmic portion of the chain corresponds to 302–658 (YRRHKKVKEV…LTEPFTSRGR (357 aa)). Residues 334–592 (KGFKQLLGKG…LGVLCSHQAV (259 aa)) enclose the Protein kinase domain. Residues 340-348 (LGKGGFGQV) and Lys363 each bind ATP. Catalysis depends on Asp460, which acts as the Proton acceptor.

It in the C-terminal section; belongs to the protein kinase superfamily. Ser/Thr protein kinase family. The protein in the N-terminal section; belongs to the leguminous lectin family.

It localises to the cell membrane. It catalyses the reaction L-seryl-[protein] + ATP = O-phospho-L-seryl-[protein] + ADP + H(+). The enzyme catalyses L-threonyl-[protein] + ATP = O-phospho-L-threonyl-[protein] + ADP + H(+). Involved in resistance response to the pathogenic oomycetes Phytophthora infestans and Phytophthora capsici and to the pathogenic bacteria Pseudomonas syringae. The protein is L-type lectin-domain containing receptor kinase V.4 of Arabidopsis thaliana (Mouse-ear cress).